Consider the following 309-residue polypeptide: Probable lipid kinase YegS-like (309 aa).

One can recognise a DAGKc domain in the interval 1 to 134; that stretch reads MTTPRWRLIL…IDLLRVDADG (134 aa). ATP contacts are provided by residues threonine 39, 65-71, and threonine 96; that span reads GDGTLSA. 3 residues coordinate Mg(2+): leucine 219, aspartate 222, and leucine 224. Catalysis depends on glutamate 280, which acts as the Proton acceptor.

This sequence belongs to the diacylglycerol/lipid kinase family. YegS lipid kinase subfamily. The cofactor is Mg(2+). Requires Ca(2+) as cofactor.

The protein localises to the cytoplasm. Functionally, probably phosphorylates lipids; the in vivo substrate is unknown. This chain is Probable lipid kinase YegS-like, found in Stenotrophomonas maltophilia (strain K279a).